Consider the following 364-residue polypeptide: D-alanine--D-alanine ligase (364 aa).

The ATP-grasp domain maps to 146 to 352 (KLCAADAGVE…FDELISRLLL (207 aa)). 179 to 234 (TERFAFPVFVKPANLGSSVGISKVHNAAELRPALDKACALDAKVLVEETITGREVE) contacts ATP. D305, E319, and N321 together coordinate Mg(2+).

This sequence belongs to the D-alanine--D-alanine ligase family. The cofactor is Mg(2+). Requires Mn(2+) as cofactor.

The protein resides in the cytoplasm. The catalysed reaction is 2 D-alanine + ATP = D-alanyl-D-alanine + ADP + phosphate + H(+). Its pathway is cell wall biogenesis; peptidoglycan biosynthesis. Its function is as follows. Cell wall formation. This chain is D-alanine--D-alanine ligase, found in Chlorobaculum parvum (strain DSM 263 / NCIMB 8327) (Chlorobium vibrioforme subsp. thiosulfatophilum).